The sequence spans 89 residues: Abortive infection protein (89 aa).

It is found in the cell membrane. ABI may interact with a target in the cell membrane, which could be the product of the host's cmrA gene, and cause disruption of the cellular membrane such that lysis of the infected cell and death of the infecting phage would result. This Escherichia coli protein is Abortive infection protein (abi).